Reading from the N-terminus, the 359-residue chain is Protein RecA (359 aa).

77–84 contacts ATP; sequence GPESSGKT.

This sequence belongs to the RecA family.

Its subcellular location is the cytoplasm. In terms of biological role, can catalyze the hydrolysis of ATP in the presence of single-stranded DNA, the ATP-dependent uptake of single-stranded DNA by duplex DNA, and the ATP-dependent hybridization of homologous single-stranded DNAs. It interacts with LexA causing its activation and leading to its autocatalytic cleavage. This chain is Protein RecA, found in Azospirillum lipoferum (strain 4B).